Reading from the N-terminus, the 293-residue chain is Probable endonuclease 4 (293 aa).

Zn(2+) is bound by residues H78, H118, E154, D188, H191, H225, D238, H240, and E270.

It belongs to the AP endonuclease 2 family. The cofactor is Zn(2+).

The enzyme catalyses Endonucleolytic cleavage to 5'-phosphooligonucleotide end-products.. In terms of biological role, endonuclease IV plays a role in DNA repair. It cleaves phosphodiester bonds at apurinic or apyrimidinic (AP) sites, generating a 3'-hydroxyl group and a 5'-terminal sugar phosphate. The sequence is that of Probable endonuclease 4 from Vibrio vulnificus (strain YJ016).